The chain runs to 361 residues: Chorismate synthase (361 aa).

The NADP(+) site is built by Arg48 and Arg54. Residues 125-127, 238-239, Gly278, 293-297, and Arg319 each bind FMN; these read RSS, NA, and KPTSS.

The protein belongs to the chorismate synthase family. In terms of assembly, homotetramer. FMNH2 is required as a cofactor.

The catalysed reaction is 5-O-(1-carboxyvinyl)-3-phosphoshikimate = chorismate + phosphate. It functions in the pathway metabolic intermediate biosynthesis; chorismate biosynthesis; chorismate from D-erythrose 4-phosphate and phosphoenolpyruvate: step 7/7. Its function is as follows. Catalyzes the anti-1,4-elimination of the C-3 phosphate and the C-6 proR hydrogen from 5-enolpyruvylshikimate-3-phosphate (EPSP) to yield chorismate, which is the branch point compound that serves as the starting substrate for the three terminal pathways of aromatic amino acid biosynthesis. This reaction introduces a second double bond into the aromatic ring system. The sequence is that of Chorismate synthase from Sodalis glossinidius (strain morsitans).